We begin with the raw amino-acid sequence, 259 residues long: 5'-nucleotidase SurE (259 aa).

A divalent metal cation-binding residues include aspartate 11, aspartate 12, serine 42, and asparagine 99.

This sequence belongs to the SurE nucleotidase family. A divalent metal cation serves as cofactor.

It is found in the cytoplasm. It catalyses the reaction a ribonucleoside 5'-phosphate + H2O = a ribonucleoside + phosphate. In terms of biological role, nucleotidase that shows phosphatase activity on nucleoside 5'-monophosphates. This chain is 5'-nucleotidase SurE, found in Cytophaga hutchinsonii (strain ATCC 33406 / DSM 1761 / CIP 103989 / NBRC 15051 / NCIMB 9469 / D465).